Consider the following 119-residue polypeptide: Large ribosomal subunit protein bL20 (119 aa).

This sequence belongs to the bacterial ribosomal protein bL20 family.

Binds directly to 23S ribosomal RNA and is necessary for the in vitro assembly process of the 50S ribosomal subunit. It is not involved in the protein synthesizing functions of that subunit. This Xylella fastidiosa (strain M23) protein is Large ribosomal subunit protein bL20.